We begin with the raw amino-acid sequence, 211 residues long: Interleukin-6 (211 aa).

Residues 1–25 (MNSLSTSTFSPVAFSLGLLLVMATA) form the signal peptide. A disulfide bridge links C71 with C77. S80 is modified (phosphoserine). C100 and C110 form a disulfide bridge.

Belongs to the IL-6 superfamily. In terms of assembly, component of a hexamer of two molecules each of IL6, IL6R and IL6ST; first binds to IL6R to associate with the signaling subunit IL6ST. Interacts with IL6R (via the N-terminal ectodomain); this interaction may be affected by IL6R-binding with SORL1, hence decreasing IL6 cis signaling. Interacts with SORL1 (via the N-terminal ectodomain); this interaction leads to IL6 internalization and lysosomal degradation. May form a trimeric complex with the soluble SORL1 ectodomain and soluble IL6R receptor; this interaction might stabilize circulating IL6, hence promoting IL6 trans signaling.

It localises to the secreted. Functionally, cytokine with a wide variety of biological functions in immunity, tissue regeneration, and metabolism. Binds to IL6R, then the complex associates to the signaling subunit IL6ST/gp130 to trigger the intracellular IL6-signaling pathway. The interaction with the membrane-bound IL6R and IL6ST stimulates 'classic signaling', whereas the binding of IL6 and soluble IL6R to IL6ST stimulates 'trans-signaling'. Alternatively, 'cluster signaling' occurs when membrane-bound IL6:IL6R complexes on transmitter cells activate IL6ST receptors on neighboring receiver cells. Its function is as follows. IL6 is a potent inducer of the acute phase response. Rapid production of IL6 contributes to host defense during infection and tissue injury, but excessive IL6 synthesis is involved in disease pathology. In the innate immune response, is synthesized by myeloid cells, such as macrophages and dendritic cells, upon recognition of pathogens through toll-like receptors (TLRs) at the site of infection or tissue injury. In the adaptive immune response, is required for the differentiation of B cells into immunoglobulin-secreting cells. Plays a major role in the differentiation of CD4(+) T cell subsets. Essential factor for the development of T follicular helper (Tfh) cells that are required for the induction of germinal-center formation. Required to drive naive CD4(+) T cells to the Th17 lineage. Also required for proliferation of myeloma cells and the survival of plasmablast cells. Acts as an essential factor in bone homeostasis and on vessels directly or indirectly by induction of VEGF, resulting in increased angiogenesis activity and vascular permeability. Induces, through 'trans-signaling' and synergistically with IL1B and TNF, the production of VEGF. Involved in metabolic controls, is discharged into the bloodstream after muscle contraction increasing lipolysis and improving insulin resistance. 'Trans-signaling' in central nervous system also regulates energy and glucose homeostasis. Mediates, through GLP-1, crosstalk between insulin-sensitive tissues, intestinal L cells and pancreatic islets to adapt to changes in insulin demand. Also acts as a myokine. Plays a protective role during liver injury, being required for maintenance of tissue regeneration. Also has a pivotal role in iron metabolism by regulating HAMP/hepcidin expression upon inflammation or bacterial infection. Through activation of IL6ST-YAP-NOTCH pathway, induces inflammation-induced epithelial regeneration. This Lama glama (Llama) protein is Interleukin-6 (IL6).